Here is an 811-residue protein sequence, read N- to C-terminus: Lon protease 1 (811 aa).

One can recognise a Lon N-terminal domain in the interval 15 to 212 (LPVLSLRDTV…SLALHLYRQI (198 aa)). Position 376-383 (376-383 (GPPGTGKT)) interacts with ATP. A Lon proteolytic domain is found at 613–794 (YDQPGVATGM…DEALARCLRL (182 aa)). Residues Ser-700 and Lys-743 contribute to the active site.

This sequence belongs to the peptidase S16 family. Homohexamer. Organized in a ring with a central cavity.

The protein resides in the cytoplasm. It catalyses the reaction Hydrolysis of proteins in presence of ATP.. ATP-dependent serine protease that mediates the selective degradation of mutant and abnormal proteins as well as certain short-lived regulatory proteins. Required for cellular homeostasis and for survival from DNA damage and developmental changes induced by stress. Degrades polypeptides processively to yield small peptide fragments that are 5 to 10 amino acids long. Binds to DNA in a double-stranded, site-specific manner. The protein is Lon protease 1 of Sorangium cellulosum (strain So ce56) (Polyangium cellulosum (strain So ce56)).